The sequence spans 668 residues: DNA mismatch repair protein MutL (668 aa).

A disordered region spans residues T437 to K459. The segment covering Y438 to K459 has biased composition (polar residues).

This sequence belongs to the DNA mismatch repair MutL/HexB family.

This protein is involved in the repair of mismatches in DNA. It is required for dam-dependent methyl-directed DNA mismatch repair. May act as a 'molecular matchmaker', a protein that promotes the formation of a stable complex between two or more DNA-binding proteins in an ATP-dependent manner without itself being part of a final effector complex. The protein is DNA mismatch repair protein MutL of Leuconostoc citreum (strain KM20).